The primary structure comprises 380 residues: Putative ankyrin repeat protein RF_1306 (380 aa).

ANK repeat units follow at residues 48 to 76 (NKWS…NINA), 80 to 109 (KCRT…KIAP), 112 to 143 (YGWS…KYDK), 170 to 199 (NNKT…KFDI), 203 to 233 (LGYK…GKNT), 239 to 268 (LEKV…GFDK), 270 to 299 (LGQK…DAQY), 303 to 333 (LGRS…DINY), and 337 to 366 (SGLN…YESY).

The chain is Putative ankyrin repeat protein RF_1306 from Rickettsia felis (strain ATCC VR-1525 / URRWXCal2) (Rickettsia azadi).